The following is a 484-amino-acid chain: tRNA sulfurtransferase (484 aa).

The region spanning 63 to 167 (EAFAERLACI…KESLYLVSKR (105 aa)) is the THUMP domain. Residues 185-186 (LI), Lys267, Gly289, and Gln298 each bind ATP. An intrachain disulfide couples Cys346 to Cys458. The Rhodanese domain maps to 406-484 (INSGEVIIDV…GYDNVKVYRP (79 aa)). The active-site Cysteine persulfide intermediate is the Cys458.

The protein belongs to the ThiI family.

The protein localises to the cytoplasm. The enzyme catalyses [ThiI sulfur-carrier protein]-S-sulfanyl-L-cysteine + a uridine in tRNA + 2 reduced [2Fe-2S]-[ferredoxin] + ATP + H(+) = [ThiI sulfur-carrier protein]-L-cysteine + a 4-thiouridine in tRNA + 2 oxidized [2Fe-2S]-[ferredoxin] + AMP + diphosphate. It catalyses the reaction [ThiS sulfur-carrier protein]-C-terminal Gly-Gly-AMP + S-sulfanyl-L-cysteinyl-[cysteine desulfurase] + AH2 = [ThiS sulfur-carrier protein]-C-terminal-Gly-aminoethanethioate + L-cysteinyl-[cysteine desulfurase] + A + AMP + 2 H(+). Its pathway is cofactor biosynthesis; thiamine diphosphate biosynthesis. In terms of biological role, catalyzes the ATP-dependent transfer of a sulfur to tRNA to produce 4-thiouridine in position 8 of tRNAs, which functions as a near-UV photosensor. Also catalyzes the transfer of sulfur to the sulfur carrier protein ThiS, forming ThiS-thiocarboxylate. This is a step in the synthesis of thiazole, in the thiamine biosynthesis pathway. The sulfur is donated as persulfide by IscS. The polypeptide is tRNA sulfurtransferase (Shewanella woodyi (strain ATCC 51908 / MS32)).